The sequence spans 85 residues: UPF0291 protein SAK_0343 (85 aa).

The tract at residues 58-85 (GNDVTPEKLRQVQREKGLHGRSLDDPNS) is disordered. A compositionally biased stretch (basic and acidic residues) spans 62–85 (TPEKLRQVQREKGLHGRSLDDPNS).

The protein belongs to the UPF0291 family.

Its subcellular location is the cytoplasm. This Streptococcus agalactiae serotype Ia (strain ATCC 27591 / A909 / CDC SS700) protein is UPF0291 protein SAK_0343.